The chain runs to 358 residues: HTH-type transcriptional regulator IpsA (358 aa).

The HTH lacI-type domain occupies 8-63 (GTLASIAAKLGISRTTVSNAYNRPEQLSAELRQRILDTAEDMGYLGPDPVARSLRT). Positions 10-29 (LASIAAKLGISRTTVSNAYN) form a DNA-binding region, H-T-H motif.

Homodimer.

With respect to regulation, myo-inositol causes the dissociation of the IpsA-DNA complex in vitro. Its function is as follows. Plays a role in the regulation of cell wall biogenesis. Inositol-dependent transcriptional activator of ino1, which encodes inositol phosphate synthase. Also regulates other target genes, which are most likely involved in the synthesis of inositol-derived cell wall components and mycothiol. Acts by binding to a conserved palindromic motif within the promoter regions. The chain is HTH-type transcriptional regulator IpsA from Corynebacterium glutamicum (strain ATCC 13032 / DSM 20300 / JCM 1318 / BCRC 11384 / CCUG 27702 / LMG 3730 / NBRC 12168 / NCIMB 10025 / NRRL B-2784 / 534).